The following is a 670-amino-acid chain: DNA-binding transcriptional activator HyfR (670 aa).

In terms of domain architecture, GAF spans 169 to 311 (DLDDLIADVA…HIADRIAIAV (143 aa)). A Cys-rich segment, might bind a metal cluster motif is present at residues 207-221 (CSDLSASHCACLPRC). The Sigma-54 factor interaction domain occupies 347 to 576 (IIYQSQAMED…LENVIERAVL (230 aa)). ATP contacts are provided by residues 375–382 (GETGTGKE) and 438–447 (ADGGTLFLDE). Residues 641–660 (PRGAATRLGMKRTTLLSRMQ) constitute a DNA-binding region (H-T-H motif).

In terms of biological role, a transcriptional activator of its own operon; when overexpressed operon expression is strongly enhanced by low pH (under pH 6.0), strongly inhibited by O(2) but only weakly stimulated by fumarate. Expression in situ is very weak. The protein is DNA-binding transcriptional activator HyfR of Escherichia coli (strain K12).